We begin with the raw amino-acid sequence, 1306 residues long: Putative late blight resistance protein homolog R1A-10 (1306 aa).

Coiled-coil stretches lie at residues 407–428 and 520–542; these read SDSLAFLKNQLQVIQTEFESLQ and PRMKEEIVGFEDVIENLRKKLLS. The region spanning 521–808 is the NB-ARC domain; it reads RMKEEIVGFE…SEAFIKSSEG (288 aa). Residue 554 to 561 participates in ATP binding; that stretch reads GMPGLGKT. LRR repeat units follow at residues 858–881, 921–935, 936–961, 979–1007, 1010–1035, 1057–1081, 1082–1106, 1110–1129, 1130–1153, 1156–1181, and 1216–1240; these read AEENFLLWINRDQITKPSSCVYSH, LSSLHDFSISRILPN, FKFLKVLDLEHRVFIDFIPTELPYLR, LWNLETLILNRRSADSHNRVLLPSTVWDM, LRHLHIPNFSPENKKALLKNSPNLDD, TPNLRKLTCKVKCLEYLHQYHALNF, PIRLEILKLYRSNAFKAIPFCISAP, YLKLSGFYLDSQYLSKTADH, LKNLEVLKLYYVEFGDHREWKVSN, FPQLKILKLEDVSLMKWIVADDAFPN, and ESVVKSAMNIQETQVEDYQNTNFKL. Residues 1240-1306 form the HMA domain; sequence LVLIEKWPKF…KLRKCGMPGL (67 aa).

The protein belongs to the disease resistance NB-LRR family.

It is found in the cytoplasm. It localises to the membrane. Its function is as follows. Confers resistance to late blight (Phytophthora infestans) races carrying the avirulence gene Avr1. Resistance proteins guard the plant against pathogens that contain an appropriate avirulence protein via an indirect interaction with this avirulence protein. That triggers a defense system including the hypersensitive response, which restricts the pathogen growth. The polypeptide is Putative late blight resistance protein homolog R1A-10 (R1A-10) (Solanum demissum (Wild potato)).